The chain runs to 289 residues: ATP synthase gamma chain (289 aa).

It belongs to the ATPase gamma chain family. In terms of assembly, F-type ATPases have 2 components, CF(1) - the catalytic core - and CF(0) - the membrane proton channel. CF(1) has five subunits: alpha(3), beta(3), gamma(1), delta(1), epsilon(1). CF(0) has three main subunits: a, b and c.

It is found in the cell inner membrane. Produces ATP from ADP in the presence of a proton gradient across the membrane. The gamma chain is believed to be important in regulating ATPase activity and the flow of protons through the CF(0) complex. The polypeptide is ATP synthase gamma chain (Herminiimonas arsenicoxydans).